We begin with the raw amino-acid sequence, 329 residues long: DNA repair protein RAD51 homolog 4 (329 aa).

Residues 1–83 (MGMLRAGLCP…ELKTSTAILS (83 aa)) are preferentially binds ssDNA. The tract at residues 4 to 77 (LRAGLCPGLT…GADLYEELKT (74 aa)) is interaction with XRCC2. The interaction with RAD51C stretch occupies residues 77–328 (TSTAILSTGI…EQSPELPGKQ (252 aa)). ATP is bound at residue 107-114 (GGPGSGKT).

Belongs to the RecA family. RAD51 subfamily. Part of the BCDX2 complex consisting of RAD51B, RAD51C, RAD51D and XRCC2; the complex has a ring-like structure arranged into a flat disc around a central channel. In the absence of DNA, the BCDX2 subcomplex XRCC2:RAD51D formed a multimeric ring structure; in the presence of single-stranded DNA it formed a filamentous structure with the ssDNA. Interacts with SWSAP1 and ZSWIM7; involved in homologous recombination repair. Interacts with BLM; required for stimulation of BLM activity by the BCDX2 subcomplex XRCC2:RAD51D. Highly expressed in brain followed by testis. Also expressed in heart, liver, kidney, spleen, lung and skeletal muscle.

Its subcellular location is the nucleus. It is found in the chromosome. The protein resides in the telomere. In terms of biological role, involved in the homologous recombination repair (HRR) pathway of double-stranded DNA breaks arising during DNA replication or induced by DNA-damaging agents. Bind to single-stranded DNA (ssDNA) and has DNA-dependent ATPase activity. Part of the RAD51 paralog protein complex BCDX2 which acts in the BRCA1-BRCA2-dependent HR pathway. Upon DNA damage, BCDX2 acts downstream of BRCA2 recruitment and upstream of RAD51 recruitment. BCDX2 binds predominantly to the intersection of the four duplex arms of the Holliday junction and to junction of replication forks. The BCDX2 complex was originally reported to bind single-stranded DNA, single-stranded gaps in duplex DNA and specifically to nicks in duplex DNA. Involved in telomere maintenance. The BCDX2 subcomplex XRCC2:RAD51D can stimulate Holliday junction resolution by BLM. The chain is DNA repair protein RAD51 homolog 4 (Rad51d) from Mus musculus (Mouse).